The following is a 1388-amino-acid chain: Rho-associated protein kinase 2 (1388 aa).

A disordered region spans residues 1-26 (MSRPPPTGKMPGAPEAAPGDGAGAGR). Residues 92–354 (YDVVKVIGRG…VEEIKQHPFF (263 aa)) enclose the Protein kinase domain. ATP contacts are provided by residues 98–106 (IGRGAFGEV) and lysine 121. Catalysis depends on aspartate 214, which acts as the Proton acceptor. Residues 357–425 (DQWNWDNIRE…FRENLLLSDS (69 aa)) form the AGC-kinase C-terminal domain. Residues 363–784 (NIRETAAPVV…LNELLKQKDV (422 aa)) form an interaction with PPP1R12A region. Positions 373–420 (PELSSDIDSSNFDDIEDDKGDVETFPIPKAFVGNQLPFIGFTYFRENL) are interaction with NPM1. At threonine 414 the chain carries Phosphothreonine; by ROCK2. Residues 439–1131 (SEESQEIQKK…QLQALHIGMD (693 aa)) adopt a coiled-coil conformation. Residues 497-573 (TLRQLEREKA…LDEANALLRT (77 aa)) enclose the REM-1 domain. Positions 512–530 (NAEYQRKADHEADKKRNLE) are enriched in basic and acidic residues. Positions 512-532 (NAEYQRKADHEADKKRNLEND) are disordered. Position 722 is a phosphotyrosine; by SRC (tyrosine 722). Positions 979-1047 (TSDVANLANE…LAEIMNRKEP (69 aa)) constitute a RhoBD domain. The RHOA binding stretch occupies residues 979–1047 (TSDVANLANE…LAEIMNRKEP (69 aa)). Residue serine 1137 is modified to Phosphoserine. Residues 1150–1349 (ESRLEGWLSL…WVSRLVKKIP (200 aa)) enclose the PH domain. Threonine 1212 is subject to Phosphothreonine. A Phorbol-ester/DAG-type zinc finger spans residues 1260–1315 (GHEFIPTLYHFPTNCEACMKPLWHMFKPPPALECRRCHIKCHKDHMDKKEEIIAPC). The disordered stretch occupies residues 1345-1388 (VKKIPKKPPAPDPFARSSPRTSMKIQQNQSIRRPSRQLAPNKPS). Residues serine 1362 and serine 1374 each carry the phosphoserine modification. Residues 1362 to 1376 (SPRTSMKIQQNQSIR) are compositionally biased toward polar residues.

It belongs to the protein kinase superfamily. AGC Ser/Thr protein kinase family. As to quaternary structure, homodimer. Interacts with IRS1. Interacts with RAF1. Interacts with RHOA (activated by GTP), RHOB and RHOC. Interacts with PPP1R12A. Interacts with EP300. Interacts with CHORDC1. Interacts with BRCA2. Interacts with NPM1; this interaction enhances ROCK2 activity. Interacts with SORL1. Interacts with PJVK. Mg(2+) serves as cofactor. Post-translationally, autophosphorylated. Phosphorylation at Tyr-722 reduces its binding to RHOA and is crucial for focal adhesion dynamics. Dephosphorylation by PTPN11 stimulates its RHOA binding activity. In terms of processing, cleaved by granzyme B during apoptosis. This leads to constitutive activation of the kinase and membrane blebbing. As to expression, highly expressed in brain, heart, lung, liver, stomach, spleen, kidney, testis, muscle, embryo and placenta. Isoform 2 is expressed predominantly in the skeletal muscle.

It localises to the cytoplasm. Its subcellular location is the cell membrane. The protein localises to the nucleus. It is found in the cytoskeleton. The protein resides in the microtubule organizing center. It localises to the centrosome. It catalyses the reaction L-seryl-[protein] + ATP = O-phospho-L-seryl-[protein] + ADP + H(+). The enzyme catalyses L-threonyl-[protein] + ATP = O-phospho-L-threonyl-[protein] + ADP + H(+). Its activity is regulated as follows. Activated by RHOA binding. Inhibited by Y-27632. Protein kinase which is a key regulator of actin cytoskeleton and cell polarity. Involved in regulation of smooth muscle contraction, actin cytoskeleton organization, stress fiber and focal adhesion formation, neurite retraction, cell adhesion and motility via phosphorylation of ADD1, BRCA2, CNN1, EZR, DPYSL2, EP300, MSN, MYL9/MLC2, NPM1, RDX, PPP1R12A and VIM. Phosphorylates SORL1 and IRF4. Acts as a negative regulator of VEGF-induced angiogenic endothelial cell activation. Positively regulates the activation of p42/MAPK1-p44/MAPK3 and of p90RSK/RPS6KA1 during myogenic differentiation. Plays an important role in the timely initiation of centrosome duplication. Inhibits keratinocyte terminal differentiation. May regulate closure of the eyelids and ventral body wall through organization of actomyosin bundles. Plays a critical role in the regulation of spine and synaptic properties in the hippocampus. Plays a role in placental homeostasis during the perinatal period. Plays an important role in generating the circadian rhythm of the aortic myofilament Ca(2+) sensitivity and vascular contractility by modulating the myosin light chain phosphorylation. The sequence is that of Rho-associated protein kinase 2 (Rock2) from Mus musculus (Mouse).